The chain runs to 395 residues: Polar tube protein 1 (395 aa).

The N-terminal stretch at 1 to 22 (MKGISKILSASIALMKLENVYS) is a signal peptide. Disordered regions lie at residues 59-95 (CASG…APAE) and 111-133 (PGTT…QQPL). Residues 68 to 80 (SPSPAAPTSPVTP) are compositionally biased toward low complexity. Residues 81–91 (GKTSENETSPS) are compositionally biased toward polar residues. Asn86 carries an N-linked (GlcNAc...) asparagine glycan. Positions 111–128 (PGTTSGTTPGSGPCETPE) are enriched in low complexity. Asn173 is a glycosylation site (N-linked (GlcNAc...) asparagine). 4 consecutive repeat copies span residues 179–204 (PGQQ…MPST), 205–230 (PGQQ…TPST), 231–256 (PGQQ…TPST), and 257–282 (PGQQ…MPGT). A 4 X 26 AA approximate tandem repeats region spans residues 179 to 282 (PGQQQILSGT…LCQDQGMPGT (104 aa)). The disordered stretch occupies residues 277 to 300 (QGMPGTSGVPGQQGQSSGQCCAPQ). Positions 280–300 (PGTSGVPGQQGQSSGQCCAPQ) are enriched in low complexity. Asn311 carries N-linked (GlcNAc...) asparagine glycosylation.

As to quaternary structure, interacts with PTP2 and PTP3.

It is found in the spore polar tube. Functionally, involved with PTP2 and PTP3 in the formation of the polar tube through which the infectious agent is passed on to the host cell. Accounts for at least 70 percent of the mass of the polar tube. This chain is Polar tube protein 1 (PTP1), found in Encephalitozoon cuniculi (strain GB-M1) (Microsporidian parasite).